A 274-amino-acid chain; its full sequence is MNKTAIALLALLASSASLAATPWQKITQPVPGSAQSIGSFSNGCIVGADTLPIQSEHYQVMRTDQRRYFGHPDLVMFIQRLSRQVSNLGMGTVLIGDMGMPAGGRFNGGHASHQTGLDVDIFLQLPKTRWTSAQLLRPQALDLVSRDGKHVVPTLWKPEIFSLIKLAAQDKDVTRIFVNPAIKQQLCLDAGTDRDWLRKVRPWFQHRAHMHVRLRCPADSLECEDQPLPPPGDGCGAELQSWFEPPKPGTTKPEKKTPPPLPPSCQALLDEHVI.

The signal sequence occupies residues 1–19 (MNKTAIALLALLASSASLA). 3 cysteine pairs are disulfide-bonded: cysteine 44/cysteine 265, cysteine 187/cysteine 235, and cysteine 216/cysteine 223. Histidine 110, histidine 113, aspartate 120, aspartate 147, histidine 150, and histidine 211 together coordinate Zn(2+). Positions 227–274 (PLPPPGDGCGAELQSWFEPPKPGTTKPEKKTPPPLPPSCQALLDEHVI) are disordered.

The protein belongs to the peptidase M74 family. As to quaternary structure, dimer. It depends on Zn(2+) as a cofactor.

The protein resides in the periplasm. Functionally, murein endopeptidase that cleaves the D-alanyl-meso-2,6-diamino-pimelyl amide bond that connects peptidoglycan strands. Likely plays a role in the removal of murein from the sacculus. This chain is Penicillin-insensitive murein endopeptidase, found in Escherichia coli O6:K15:H31 (strain 536 / UPEC).